We begin with the raw amino-acid sequence, 442 residues long: Probable serine/threonine-protein kinase PBL17 (442 aa).

Gly-2 carries N-myristoyl glycine lipidation. Cys-4 carries the S-palmitoyl cysteine lipid modification. Thr-79 bears the Phosphothreonine mark. One can recognise a Protein kinase domain in the interval 90-370 (FRPDYILGEG…NHVVEVLETL (281 aa)). Residues 96-104 (LGEGGFGVV) and Lys-125 each bind ATP. Tyr-170 is subject to Phosphotyrosine. The active-site Proton acceptor is the Asp-220. The residue at position 254 (Ser-254) is a Phosphoserine. Thr-255 and Thr-260 each carry phosphothreonine. Residue Tyr-268 is modified to Phosphotyrosine. A disordered region spans residues 385-442 (HSRGKSVTLYEASSDSQGTRDGNGQRRRRPESGRSKSEAAVDTEKYVSTLSEPDTTKI). Polar residues predominate over residues 395-406 (EASSDSQGTRDG). A compositionally biased stretch (basic and acidic residues) spans 414–429 (PESGRSKSEAAVDTEK). Over residues 430–442 (YVSTLSEPDTTKI) the composition is skewed to polar residues.

Belongs to the protein kinase superfamily. Ser/Thr protein kinase family.

It localises to the cell membrane. The enzyme catalyses L-seryl-[protein] + ATP = O-phospho-L-seryl-[protein] + ADP + H(+). The catalysed reaction is L-threonyl-[protein] + ATP = O-phospho-L-threonyl-[protein] + ADP + H(+). Functionally, may be involved in plant defense signaling. The sequence is that of Probable serine/threonine-protein kinase PBL17 from Arabidopsis thaliana (Mouse-ear cress).